A 242-amino-acid chain; its full sequence is MSGHSKWANIRHKKEKTDAQKGKIFSKLGRELMVVAKMYGPDPETNPKLRDVIAKAKANNMPMDKIMGFIKRAAGEIDTTGYEDITYEGYGPGGVAVIVEAMTNNRNRTAGEIRHIFDKNGGNLGQTGCVSWMFNRKGVIVIEKENFPDEDFVMEKALEYGAEDFASEEDVYEIITTPEDFSKVREGLEKEGFTFIRAQIEMIPQTTVRLSEEDAQKMRRLIDMLEDNDDVKEVYHNWEEEE.

The disordered stretch occupies residues 1–20 (MSGHSKWANIRHKKEKTDAQ).

Belongs to the TACO1 family.

Its subcellular location is the cytoplasm. This is Probable transcriptional regulatory protein Csac_0964 from Caldicellulosiruptor saccharolyticus (strain ATCC 43494 / DSM 8903 / Tp8T 6331).